Here is a 52-residue protein sequence, read N- to C-terminus: Large ribosomal subunit protein bL33A (52 aa).

Belongs to the bacterial ribosomal protein bL33 family.

The polypeptide is Large ribosomal subunit protein bL33A (Staphylococcus aureus (strain USA300)).